Reading from the N-terminus, the 600-residue chain is Aspartate--tRNA(Asp/Asn) ligase (600 aa).

Glutamate 181 contributes to the L-aspartate binding site. The segment at 205–208 (QQFK) is aspartate. Arginine 227 lines the L-aspartate pocket. ATP is bound by residues 227–229 (RDE) and glutamine 236. Histidine 455 lines the L-aspartate pocket. Glutamate 489 contributes to the ATP binding site. Arginine 496 serves as a coordination point for L-aspartate. 541–544 (GIDR) contributes to the ATP binding site.

Belongs to the class-II aminoacyl-tRNA synthetase family. Type 1 subfamily. Homodimer.

The protein localises to the cytoplasm. It carries out the reaction tRNA(Asx) + L-aspartate + ATP = L-aspartyl-tRNA(Asx) + AMP + diphosphate. In terms of biological role, aspartyl-tRNA synthetase with relaxed tRNA specificity since it is able to aspartylate not only its cognate tRNA(Asp) but also tRNA(Asn). Reaction proceeds in two steps: L-aspartate is first activated by ATP to form Asp-AMP and then transferred to the acceptor end of tRNA(Asp/Asn). This is Aspartate--tRNA(Asp/Asn) ligase from Rubrobacter xylanophilus (strain DSM 9941 / JCM 11954 / NBRC 16129 / PRD-1).